We begin with the raw amino-acid sequence, 818 residues long: Protein Cep78 homolog (818 aa).

Disordered regions lie at residues 513-589 (LDVE…HEFA), 691-748 (RQAN…TEAT), and 768-798 (KQSE…DQNV). The span at 514–539 (DVEEEEEEEEEEQQAEESQSESEPQN) shows a compositional bias: acidic residues. A compositionally biased stretch (basic and acidic residues) spans 561 to 589 (VRSEIKYVENNPKEAAKKNRESKSDHEFA). Gly residues predominate over residues 782–792 (GDAGGGGGSGD).

Belongs to the CEP78 family.

The protein resides in the cytoplasm. Its subcellular location is the cytoskeleton. It is found in the microtubule organizing center. It localises to the centrosome. The protein localises to the centriole. The protein resides in the cilium basal body. May play a role in cilium biogenesis. This Drosophila melanogaster (Fruit fly) protein is Protein Cep78 homolog.